The sequence spans 138 residues: Cysteine desulfuration protein SufE (138 aa).

Catalysis depends on Cys-51, which acts as the Cysteine persulfide intermediate.

This sequence belongs to the SufE family. Homodimer. Interacts with SufS.

Its subcellular location is the cytoplasm. The protein operates within cofactor biosynthesis; iron-sulfur cluster biosynthesis. In terms of biological role, participates in cysteine desulfuration mediated by SufS. Cysteine desulfuration mobilizes sulfur from L-cysteine to yield L-alanine and constitutes an essential step in sulfur metabolism for biosynthesis of a variety of sulfur-containing biomolecules. Functions as a sulfur acceptor for SufS, by mediating the direct transfer of the sulfur atom from the S-sulfanylcysteine of SufS, an intermediate product of cysteine desulfuration process. This Escherichia fergusonii (strain ATCC 35469 / DSM 13698 / CCUG 18766 / IAM 14443 / JCM 21226 / LMG 7866 / NBRC 102419 / NCTC 12128 / CDC 0568-73) protein is Cysteine desulfuration protein SufE.